The chain runs to 28 residues: ARQLNPSDQELQSPQQLYPQQPYPQQPY.

Residues 1 to 28 (ARQLNPSDQELQSPQQLYPQQPYPQQPY) are disordered. Low complexity predominate over residues 9-20 (QELQSPQQLYPQ).

In Triticum monococcum (Einkorn wheat), this protein is Omega-gliadin.